Reading from the N-terminus, the 196-residue chain is Mitochondrial intermembrane space cysteine motif-containing protein MIX23 (196 aa).

The Cx14C motif signature appears at 99-114 (CEKEAAEMKNETDQQC). The Cx13C motif motif lies at 178–192 (CEQNNDYLKEFTQFC).

The protein belongs to the MIX23 family.

It localises to the mitochondrion intermembrane space. Functionally, regulator of the mitochondrial protein import machinery that is localized in the mitochondrial intermembrane space (IMS) and facilitates the transport of proteins from the cytosol into the mitochondrial matrix. Not essential for mitochondrial protein import but induced and required when mitochondrial import is compromised. Stimulates or stabilizes the translocation into the mitochondria of proteins such as OXA1, ATP1 and COX12. The sequence is that of Mitochondrial intermembrane space cysteine motif-containing protein MIX23 from Saccharomyces cerevisiae (strain ATCC 204508 / S288c) (Baker's yeast).